The following is a 338-amino-acid chain: UDP-glucose 4-epimerase (338 aa).

Residues 11 to 12, 31 to 36, 58 to 59, 80 to 84, asparagine 99, serine 124, tyrosine 149, lysine 153, and phenylalanine 178 contribute to the NAD(+) site; these read YI, DNLCNS, DI, and FAGLK. Serine 124 and tyrosine 149 together coordinate substrate. Catalysis depends on tyrosine 149, which acts as the Proton acceptor. Residues asparagine 179, 199 to 200, 216 to 218, arginine 231, 292 to 295, and tyrosine 299 contribute to the substrate site; these read NL, AVF, and RDGD.

This sequence belongs to the NAD(P)-dependent epimerase/dehydratase family. Homodimer. Requires NAD(+) as cofactor.

The catalysed reaction is UDP-alpha-D-glucose = UDP-alpha-D-galactose. It participates in carbohydrate metabolism; galactose metabolism. Functionally, involved in the metabolism of galactose. Catalyzes the conversion of UDP-galactose (UDP-Gal) to UDP-glucose (UDP-Glc) through a mechanism involving the transient reduction of NAD. This Salmonella typhi protein is UDP-glucose 4-epimerase (galE).